The chain runs to 169 residues: Peptide deformylase (169 aa).

Fe cation-binding residues include cysteine 91 and histidine 133. Residue glutamate 134 is part of the active site. Histidine 137 lines the Fe cation pocket.

This sequence belongs to the polypeptide deformylase family. The cofactor is Fe(2+).

It catalyses the reaction N-terminal N-formyl-L-methionyl-[peptide] + H2O = N-terminal L-methionyl-[peptide] + formate. In terms of biological role, removes the formyl group from the N-terminal Met of newly synthesized proteins. Requires at least a dipeptide for an efficient rate of reaction. N-terminal L-methionine is a prerequisite for activity but the enzyme has broad specificity at other positions. In Salmonella agona (strain SL483), this protein is Peptide deformylase.